We begin with the raw amino-acid sequence, 176 residues long: Ribosome maturation factor RimM (176 aa).

In terms of domain architecture, PRC barrel spans 96-176 (PEDEFYWRDL…QILVDWDPDF (81 aa)).

The protein belongs to the RimM family. As to quaternary structure, binds ribosomal protein uS19.

The protein resides in the cytoplasm. An accessory protein needed during the final step in the assembly of 30S ribosomal subunit, possibly for assembly of the head region. Essential for efficient processing of 16S rRNA. May be needed both before and after RbfA during the maturation of 16S rRNA. It has affinity for free ribosomal 30S subunits but not for 70S ribosomes. The chain is Ribosome maturation factor RimM from Shewanella woodyi (strain ATCC 51908 / MS32).